The following is a 552-amino-acid chain: Undecaprenyl phosphate-alpha-4-amino-4-deoxy-L-arabinose arabinosyl transferase (552 aa).

Transmembrane regions (helical) follow at residues isoleucine 4–glycine 24, phenylalanine 81–leucine 101, valine 113–valine 133, phenylalanine 176–isoleucine 196, phenylalanine 207–alanine 227, alanine 255–leucine 275, glutamine 289–alanine 309, leucine 313–glutamine 333, leucine 351–threonine 371, valine 384–histidine 404, and tryptophan 411–valine 431.

The protein belongs to the glycosyltransferase 83 family.

The protein resides in the cell inner membrane. It carries out the reaction 4-amino-4-deoxy-alpha-L-arabinopyranosyl di-trans,octa-cis-undecaprenyl phosphate + lipid IVA = lipid IIA + di-trans,octa-cis-undecaprenyl phosphate.. It functions in the pathway lipopolysaccharide metabolism; 4-amino-4-deoxy-beta-L-arabinose-lipid A biosynthesis. In terms of biological role, catalyzes the transfer of the L-Ara4N moiety of the glycolipid undecaprenyl phosphate-alpha-L-Ara4N to lipid A. The modified arabinose is attached to lipid A and is required for resistance to polymyxin and cationic antimicrobial peptides. The chain is Undecaprenyl phosphate-alpha-4-amino-4-deoxy-L-arabinose arabinosyl transferase from Edwardsiella ictaluri (strain 93-146).